The sequence spans 122 residues: MADLNAIVDQLSSLTVLEAAELVKQLESKWGVSAAAVAVAAGPAAAAAPVEEKTEFTVVLANAGANKINVIKEIRAITGLGLKEAKDLVEGAPKNVKEGVNKDDAKKIKDQLTAAGATVDIK.

It belongs to the bacterial ribosomal protein bL12 family. In terms of assembly, homodimer. Part of the ribosomal stalk of the 50S ribosomal subunit. Forms a multimeric L10(L12)X complex, where L10 forms an elongated spine to which 2 to 4 L12 dimers bind in a sequential fashion. Binds GTP-bound translation factors.

Functionally, forms part of the ribosomal stalk which helps the ribosome interact with GTP-bound translation factors. Is thus essential for accurate translation. The sequence is that of Large ribosomal subunit protein bL12 from Myxococcus xanthus (strain DK1622).